Here is a 113-residue protein sequence, read N- to C-terminus: U11-theraphotoxin-Hhn1a (113 aa).

An N-terminal signal peptide occupies residues 1–21 (MNTVRVTFLLVFVLAVSLGQA). The propeptide occupies 22–74 (DKDENRMEMQEKTEQGRSYLDFAENLLLQKLEELEAKLLEEDSEESRNSRQKR). The segment at 61 to 83 (EEDSEESRNSRQKRCIGEGVPCD) is disordered. 3 disulfide bridges follow: Cys75–Cys90, Cys82–Cys95, and Cys89–Cys110.

This sequence belongs to the neurotoxin 14 (magi-1) family. 01 (HNTX-16) subfamily. Expressed by the venom gland.

Its subcellular location is the secreted. In terms of biological role, probable ion channel inhibitor. The protein is U11-theraphotoxin-Hhn1a of Cyriopagopus hainanus (Chinese bird spider).